A 230-amino-acid polypeptide reads, in one-letter code: Uracil-DNA glycosylase (230 aa).

Aspartate 71 (proton acceptor) is an active-site residue.

This sequence belongs to the uracil-DNA glycosylase (UDG) superfamily. UNG family.

Its subcellular location is the cytoplasm. It carries out the reaction Hydrolyzes single-stranded DNA or mismatched double-stranded DNA and polynucleotides, releasing free uracil.. In terms of biological role, excises uracil residues from the DNA which can arise as a result of misincorporation of dUMP residues by DNA polymerase or due to deamination of cytosine. The protein is Uracil-DNA glycosylase of Tropheryma whipplei (strain TW08/27) (Whipple's bacillus).